Consider the following 170-residue polypeptide: Glycine cleavage system H protein, mitochondrial (170 aa).

The N-terminal 45 residues, 1-45 (MSLRVVRSVRAVACSLRIALASCPPRPWAPSAAAVRSLRTGSALL), are a transit peptide targeting the mitochondrion. A Lipoyl-binding domain is found at 63–145 (IGTVGISNFA…YEDGWLIKMT (83 aa)). Position 104 is an N6-lipoyllysine (Lys104).

Belongs to the GcvH family. As to quaternary structure, the glycine cleavage system is composed of four proteins: P (GLDC), T (GCST), L (DLD) and H (GCSH). Interacts with GLDC. It depends on (R)-lipoate as a cofactor.

It is found in the mitochondrion. Functionally, the glycine cleavage system catalyzes the degradation of glycine. The H protein (GCSH) shuttles the methylamine group of glycine from the P protein (GLDC) to the T protein (GCST). Has a pivotal role in the lipoylation of enzymes involved in cellular energetics such as the mitochondrial dihydrolipoyllysine-residue acetyltransferase component of pyruvate dehydrogenase complex (DLAT), and the mitochondrial dihydrolipoyllysine-residue succinyltransferase component of 2-oxoglutarate dehydrogenase complex (DLST). The chain is Glycine cleavage system H protein, mitochondrial from Rattus norvegicus (Rat).